Here is a 253-residue protein sequence, read N- to C-terminus: 5-oxoprolinase subunit A (253 aa).

This sequence belongs to the LamB/PxpA family. As to quaternary structure, forms a complex composed of PxpA, PxpB and PxpC.

The enzyme catalyses 5-oxo-L-proline + ATP + 2 H2O = L-glutamate + ADP + phosphate + H(+). Catalyzes the cleavage of 5-oxoproline to form L-glutamate coupled to the hydrolysis of ATP to ADP and inorganic phosphate. The protein is 5-oxoprolinase subunit A of Bacillus thuringiensis subsp. konkukian (strain 97-27).